A 274-amino-acid chain; its full sequence is MPVAEEFQASWADEVEIDQGVLPPPSEVVENGLKIVTEYKYDNDNKKVKIVRTYKIEKRVVSKSIAKRKTWSKFGDSASDKPGPNPATTNVAEDVFMQFITSKEESQRPDDGELDGLKPPSSNVIFKCRTCQGDHLTLYCPFKHTQIAQAKTAEAAKAAEAKVAASNKYIPPSSAGRIPGRDQPPVSREDVTAIRISNLSNFAVEADIDDLVKGFGPVHKLYLAKEKSTGHCKGFAYVHFKFRADAAKAIQSLNGHGYDHLILNVEWSKPPQNN.

In terms of domain architecture, RRM spans 192–270 (TAIRISNLSN…LILNVEWSKP (79 aa)).

The protein belongs to the eIF-3 subunit G family. Component of the eukaryotic translation initiation factor 3 (eIF-3) complex.

It is found in the cytoplasm. Functionally, RNA-binding component of the eukaryotic translation initiation factor 3 (eIF-3) complex, which is involved in protein synthesis of a specialized repertoire of mRNAs and, together with other initiation factors, stimulates binding of mRNA and methionyl-tRNAi to the 40S ribosome. The eIF-3 complex specifically targets and initiates translation of a subset of mRNAs involved in cell proliferation. This subunit can bind 18S rRNA. This chain is Eukaryotic translation initiation factor 3 subunit G, found in Bombyx mori (Silk moth).